A 671-amino-acid polypeptide reads, in one-letter code: K(+)-insensitive pyrophosphate-energized proton pump (671 aa).

Helical transmembrane passes span 4 to 24, 57 to 77, 79 to 99, 128 to 148, and 156 to 176; these read LIFT…FFAK, TIAV…DEGL, IAAG…IGMS, AVTG…LYIL, and VGFG…GGIF. Lysine 178 serves as a coordination point for substrate. Residues aspartate 181, aspartate 185, asparagine 208, and aspartate 211 each contribute to the Mg(2+) site. 6 helical membrane-spanning segments follow: residues 223 to 243, 249 to 269, 285 to 305, 310 to 330, 365 to 385, and 393 to 413; these read LFET…LIIG, VLYP…SVFF, GVGG…GFLM, FFYV…VTEY, TLVP…IVGG, and LYGI…IVAL. Aspartate 421 lines the Mg(2+) pocket. 4 consecutive transmembrane segments (helical) span residues 452–472, 490–510, 558–578, and 579–599; these read AVTK…LFAD, VVLS…AVMM, MAMP…FLGP, and EALA…ALMM. The Ca(2+) site is built by aspartate 607, aspartate 633, and aspartate 637. Lysine 640 provides a ligand contact to substrate. Residues 650 to 670 traverse the membrane as a helical segment; the sequence is LIKVVNMVAILFSPLIIGGGF.

It belongs to the H(+)-translocating pyrophosphatase (TC 3.A.10) family. K(+)-insensitive subfamily. As to quaternary structure, homodimer. Requires Mg(2+) as cofactor.

The protein localises to the cell membrane. The catalysed reaction is diphosphate + H2O + H(+)(in) = 2 phosphate + 2 H(+)(out). Proton pump that utilizes the energy of pyrophosphate hydrolysis as the driving force for proton movement across the membrane. Generates a proton motive force. This is K(+)-insensitive pyrophosphate-energized proton pump from Methanosarcina mazei (strain ATCC BAA-159 / DSM 3647 / Goe1 / Go1 / JCM 11833 / OCM 88) (Methanosarcina frisia).